The sequence spans 513 residues: MTTITLTPGSVPLSSWRALWQGATPKLDPACRPTIAGSASAVARILSRGKPVYGINTGFGKLAAVRIPDDQLEMLQRNIVLSHAAGVGEPSPANIVRLMMALKMTNLGRGASGVRLETIDLMEAMLAADLLPLIPAQGSVGASGDLAPLAHMACAMIGVGDVFLKGERLSAASAFRKAGLTPLPALAAKEGLALLNGTQFSTACALAGLFEAERILQSALVTGALSTEAAKGSDAPFDPRIHELRGHRGQIDCADILRDLMAGSAIRASHLENDTRVQDPYCIRCQPQVAGAALTLLRQAADTLLTESNGVSDNPLIFPETDEALSGGNFHAEPVAFAADMIAMALCEIGSISERRIAMLVDPALSGMPAFLTPQPGLNSGFMIPQVTAAALVSENKQMAFPASVDSIPTSANQEDHVSMAAHGARRLLTMAKNVDYILGIELLAAAQACDFHAPLRSSDALEALRARIRQDVPPLDHDRLMHPDIEAATGLIRSGEAIRAVNRPLPALEAAP.

Residues 142–144 constitute a cross-link (5-imidazolinone (Ala-Gly)); that stretch reads ASG. 2,3-didehydroalanine (Ser) is present on Ser143.

This sequence belongs to the PAL/histidase family. Post-translationally, contains an active site 4-methylidene-imidazol-5-one (MIO), which is formed autocatalytically by cyclization and dehydration of residues Ala-Ser-Gly.

It is found in the cytoplasm. The catalysed reaction is L-histidine = trans-urocanate + NH4(+). Its pathway is amino-acid degradation; L-histidine degradation into L-glutamate; N-formimidoyl-L-glutamate from L-histidine: step 1/3. The chain is Histidine ammonia-lyase from Hyphomonas neptunium (strain ATCC 15444).